Here is a 437-residue protein sequence, read N- to C-terminus: Ribosomal protein uS12 methylthiotransferase RimO (437 aa).

The MTTase N-terminal domain occupies Pro4–Pro114. 6 residues coordinate [4Fe-4S] cluster: Cys13, Cys49, Cys78, Cys145, Cys149, and Cys152. A Radical SAM core domain is found at Leu131–Asn369. The TRAM domain maps to Lys372 to Val437.

Belongs to the methylthiotransferase family. RimO subfamily. Requires [4Fe-4S] cluster as cofactor.

The protein resides in the cytoplasm. It catalyses the reaction L-aspartate(89)-[ribosomal protein uS12]-hydrogen + (sulfur carrier)-SH + AH2 + 2 S-adenosyl-L-methionine = 3-methylsulfanyl-L-aspartate(89)-[ribosomal protein uS12]-hydrogen + (sulfur carrier)-H + 5'-deoxyadenosine + L-methionine + A + S-adenosyl-L-homocysteine + 2 H(+). Its function is as follows. Catalyzes the methylthiolation of an aspartic acid residue of ribosomal protein uS12. The sequence is that of Ribosomal protein uS12 methylthiotransferase RimO from Brucella anthropi (strain ATCC 49188 / DSM 6882 / CCUG 24695 / JCM 21032 / LMG 3331 / NBRC 15819 / NCTC 12168 / Alc 37) (Ochrobactrum anthropi).